The chain runs to 107 residues: Ornithine carbamoyltransferase, catabolic (107 aa).

Carbamoyl phosphate contacts are provided by residues 57–61 and Gln-84; that span reads STRTR.

This sequence belongs to the aspartate/ornithine carbamoyltransferase superfamily. OTCase family.

The protein localises to the cytoplasm. It carries out the reaction carbamoyl phosphate + L-ornithine = L-citrulline + phosphate + H(+). The protein operates within amino-acid degradation; L-arginine degradation via ADI pathway; carbamoyl phosphate from L-arginine: step 2/2. This is Ornithine carbamoyltransferase, catabolic (arcB) from Streptococcus pyogenes.